A 180-amino-acid chain; its full sequence is Adenine phosphoribosyltransferase (180 aa).

The protein belongs to the purine/pyrimidine phosphoribosyltransferase family. In terms of assembly, homodimer.

It localises to the cytoplasm. It carries out the reaction AMP + diphosphate = 5-phospho-alpha-D-ribose 1-diphosphate + adenine. It participates in purine metabolism; AMP biosynthesis via salvage pathway; AMP from adenine: step 1/1. Catalyzes a salvage reaction resulting in the formation of AMP, that is energically less costly than de novo synthesis. This Pasteurella multocida (strain Pm70) protein is Adenine phosphoribosyltransferase.